Here is a 187-residue protein sequence, read N- to C-terminus: Nodulin-related protein 1 (187 aa).

An N-acetylmethionine modification is found at Met1. Disordered stretches follow at residues 1–66 and 132–176; these read MDFF…ATNA and YETS…HGFG. The segment covering 7-48 has biased composition (basic and acidic residues); it reads QVKKKFSDKKPESSDPEPNHNKNKPGHTEPTTHKPGHGEPTT. The span at 142–158 shows a compositional bias: gly residues; that stretch reads GGTGSHGNVGGHGGGAG.

As to quaternary structure, interacts with RPS2. Expressed in roots, leaves, flowers and siliques.

In terms of biological role, prevents accumulation of abscisic acid (ABA) after heat treatment, thus reducing thermotolerance. May be a negative regulator of the ABA signaling/synthesis pathway. Required for defense responses against avirulent bacteria such as P.syringae pv. tomato DC3000 (avrRpt2). The protein is Nodulin-related protein 1 of Arabidopsis thaliana (Mouse-ear cress).